The following is a 291-amino-acid chain: T-cell leukemia homeobox protein 3 (291 aa).

The tract at residues 1-51 (MEAPASAQTPHPHEPISFGIDQILNSPDQDSAPAPRGPDGASYLGGPPGGR) is disordered. Positions 166-225 (RKKPRTSFSRVQICELEKRFHRQKYLASAERAALAKSLKMTDAQVKTWFQNRRTKWRRQT) form a DNA-binding region, homeobox.

The protein localises to the nucleus. This is T-cell leukemia homeobox protein 3 (Tlx3) from Mus musculus (Mouse).